The primary structure comprises 463 residues: MVKTRFAPSPTGYLHIGGARTALFSWAFARKQGGKFILRIEDTDLERSTQQSVQAILDGMAWLGLDYDEGPYYQMQRLSRYQEVAELLLKQGLAYRCYASKEELDALREQQRLAGLKPRYDGRWRDSKQTPPAGVTPVVRFKTPREGYAVFDDLVKGRIAVANHELDDLVLMRSDGTPTYNFGVVLDDLDMGVTHVIRGDDHVNNTPRQINILKALGAIIPQYAHVPMILGADGERLSKRHGAVSVMHYRDQGYLPEALINYLARLGWSHGDEEIFSQEQLVEWFDLAAINRSPAKFNPEKLTWLNQHYLKIAEDARLMELVTPILLGRKYSLPGEENMFKIINLLKERVSTIEELADASAYFFQAVEPAEALRTQYFTVEIRPVLEYLIDRLAQIEWKREAIHQEIKQTVSSHKLKFPNLAMPLRVMVTGEAQTPAIDAVLELIGKEETLHRLRDQLDAFPQ.

Positions 8–18 match the 'HIGH' region motif; it reads PSPTGYLHIGG. The short motif at 236 to 240 is the 'KMSKS' region element; sequence RLSKR. Position 239 (Lys239) interacts with ATP.

The protein belongs to the class-I aminoacyl-tRNA synthetase family. Glutamate--tRNA ligase type 1 subfamily. In terms of assembly, monomer.

It is found in the cytoplasm. It catalyses the reaction tRNA(Glu) + L-glutamate + ATP = L-glutamyl-tRNA(Glu) + AMP + diphosphate. Catalyzes the attachment of glutamate to tRNA(Glu) in a two-step reaction: glutamate is first activated by ATP to form Glu-AMP and then transferred to the acceptor end of tRNA(Glu). This Nitrosomonas eutropha (strain DSM 101675 / C91 / Nm57) protein is Glutamate--tRNA ligase.